The chain runs to 84 residues: Small ribosomal subunit protein bS16 (84 aa).

The protein belongs to the bacterial ribosomal protein bS16 family.

This chain is Small ribosomal subunit protein bS16, found in Burkholderia ambifaria (strain MC40-6).